A 339-amino-acid chain; its full sequence is D-erythrose-4-phosphate dehydrogenase (339 aa).

Residues 12 to 13 and Arg-81 contribute to the NAD(+) site; that span reads RI. Residues 154–156, Arg-200, 213–214, and Arg-236 contribute to the substrate site; these read SCT and TK. Cys-155 functions as the Nucleophile in the catalytic mechanism. Asn-318 contacts NAD(+).

This sequence belongs to the glyceraldehyde-3-phosphate dehydrogenase family. Epd subfamily. In terms of assembly, homotetramer.

Its subcellular location is the cytoplasm. It catalyses the reaction D-erythrose 4-phosphate + NAD(+) + H2O = 4-phospho-D-erythronate + NADH + 2 H(+). It participates in cofactor biosynthesis; pyridoxine 5'-phosphate biosynthesis; pyridoxine 5'-phosphate from D-erythrose 4-phosphate: step 1/5. Functionally, catalyzes the NAD-dependent conversion of D-erythrose 4-phosphate to 4-phosphoerythronate. This is D-erythrose-4-phosphate dehydrogenase from Shigella dysenteriae serotype 1 (strain Sd197).